We begin with the raw amino-acid sequence, 696 residues long: Elongation factor G (696 aa).

Residues 10–290 (THFRNIGIAA…AVVDYLPSPL (281 aa)) enclose the tr-type G domain. GTP is bound by residues 19 to 26 (AHIDAGKT), 89 to 93 (DTPGH), and 143 to 146 (NKMD).

This sequence belongs to the TRAFAC class translation factor GTPase superfamily. Classic translation factor GTPase family. EF-G/EF-2 subfamily.

It localises to the cytoplasm. Its function is as follows. Catalyzes the GTP-dependent ribosomal translocation step during translation elongation. During this step, the ribosome changes from the pre-translocational (PRE) to the post-translocational (POST) state as the newly formed A-site-bound peptidyl-tRNA and P-site-bound deacylated tRNA move to the P and E sites, respectively. Catalyzes the coordinated movement of the two tRNA molecules, the mRNA and conformational changes in the ribosome. The polypeptide is Elongation factor G (Deinococcus geothermalis (strain DSM 11300 / CIP 105573 / AG-3a)).